Consider the following 239-residue polypeptide: MTEDAEKRRYWLMKAEGEPRYVKGINVAFTFEMLEEITEDGKMESWSGVRNYEARNMIRDEIKIGDYAFLYCSNCKFPHIKGVMRICSNSHPDDSAWNSNDPYYDPKSTPQNPRWYSVGVQSEYKLDRPVTLRELKMHKENQLKSMELLNRSRLSISRVKPEEWKFIHELSKQPEPEEIIKARLQEEEKVAKRKRKLNLSDGENKAKSPYSSISENDASLDIIKRSRIKDVRSQKDNAL.

A disordered region spans residues 193-214; it reads RKRKLNLSDGENKAKSPYSSIS.

It is found in the nucleus. This is an uncharacterized protein from Schizosaccharomyces pombe (strain 972 / ATCC 24843) (Fission yeast).